Here is a 380-residue protein sequence, read N- to C-terminus: Peroxisomal membrane protein PEX13 (380 aa).

The interval 1 to 30 is disordered; the sequence is MSDSSAPDLPSKPSSLNAGQSSSLQTTNTG. The Lumenal portion of the chain corresponds to 1 to 230; sequence MSDSSAPDLP…NKNTNKLSLK (230 aa). Polar residues predominate over residues 12 to 30; it reads KPSSLNAGQSSSLQTTNTG. Residues 231–251 traverse the membrane as a helical segment; the sequence is PLLLFLAAVVGFPYLLKKLIA. Residues 252–380 are Cytoplasmic-facing; the sequence is HLAETSQMNG…DSTEFQKMKT (129 aa). The SH3 domain occupies 277-344; it reads TKLEFARALY…PYNYVEIIER (68 aa).

The protein belongs to the peroxin-13 family. Interacts (via SH3 domain) with PEX14 (via SH3-binding motif); forming the PEX13-PEX14 docking complex.

It is found in the peroxisome membrane. In terms of biological role, component of the PEX13-PEX14 docking complex, a translocon channel that specifically mediates the import of peroxisomal cargo proteins bound to PEX5 receptor. The PEX13-PEX14 docking complex forms a large import pore which can be opened to a diameter of about 9 nm. Mechanistically, PEX5 receptor along with cargo proteins associates with the PEX14 subunit of the PEX13-PEX14 docking complex in the cytosol, leading to the insertion of the receptor into the organelle membrane with the concomitant translocation of the cargo into the peroxisome matrix. The sequence is that of Peroxisomal membrane protein PEX13 (PEX13) from Komagataella pastoris (Yeast).